A 366-amino-acid polypeptide reads, in one-letter code: MVSQRSLLLLLLLTLRDVDSCQGPELVRELVLAKVKALFLDALGPPAMDGEGGDPGIRRLPRRHAVGGFMHRTSEPEEEDVSQAILFPATGATCEDQPAARGLAQEAEEGLFTYVFRPSQHIRSHQVTSAQLWFHTGLGRKSTAAANSSAPLLDLLVLSSGGPMAVPVSLGQGPPRWAVLHLAASAFPLLTHPILVLLLRCPLCSCSGRPETTPFLVAHTRARAPSAGERARRSTPSVPWPWSPAALRLLQRPPEEPAAHAFCHRAALNISFQELGWDRWIVHPPSFIFHYCHGSCGMPTSDLPLPVPGVPPTPVQPLFLVPGAKPCCAALPGSMRSLRVRTTSDGGYSFKYEMVPNLITQHCACI.

The N-terminal stretch at 1 to 20 (MVSQRSLLLLLLLTLRDVDS) is a signal peptide. The propeptide occupies 21–63 (CQGPELVRELVLAKVKALFLDALGPPAMDGEGGDPGIRRLPRR). Positions 64 to 233 (HAVGGFMHRT…APSAGERARR (170 aa)) are cleaved as a propeptide — inhibin alpha N-terminal region. 2 N-linked (GlcNAc...) asparagine glycosylation sites follow: Asn147 and Asn269. 3 cysteine pairs are disulfide-bonded: Cys263/Cys328, Cys292/Cys363, and Cys296/Cys365.

The protein belongs to the TGF-beta family. Dimeric, linked by one or more disulfide bonds. Activin B is a dimer of alpha and beta-B. Inhibin A is a dimer of alpha and beta-A. Inhibin B is a dimer of alpha and beta-B. Interacts with TGFBR3L; this interaction regulates female fertility. Post-translationally, proteolytic processing yields a number of bioactive forms, consisting either solely of the mature alpha chain, of the most N-terminal propeptide linked through a disulfide bond to the mature alpha chain, or of the entire proprotein.

It is found in the secreted. Functionally, inhibins and activins inhibit and activate, respectively, the secretion of follitropin by the pituitary gland. Inhibins/activins are involved in regulating a number of diverse functions such as hypothalamic and pituitary hormone secretion, gonadal hormone secretion, germ cell development and maturation, erythroid differentiation, insulin secretion, nerve cell survival, embryonic axial development or bone growth, depending on their subunit composition. Inhibins appear to oppose the functions of activins. Its function is as follows. Inhibin A is a dimer of alpha/INHA and beta-A/INHBA that functions as a feedback regulator in the hypothalamic-pituitary-gonadal (HPG) axis. Inhibits the secretion of FSH from the anterior pituitary gland by acting on pituitary gonadotrope cells. Antagonizes activin A by binding to the proteoglycan, betaglycan, and forming a stable complex with and, thereby, sequestering type II activin receptors while excluding type I receptor. In terms of biological role, inhibin B is a dimer of alpha and beta-B that plays a crucial role in the regulation of the reproductive system by inhibiting the secretion of follicle-stimulating hormone (FSH) from the anterior pituitary gland. Thereby, maintains reproductive homeostasis in both males and females. Acts as a more potent suppressor of FSH release than inhibin A. Functions as competitive receptor antagonist binding activin type II receptors with high affinity in the presence of the TGF-beta type III coreceptor/TGFBR3L. In Mus musculus (Mouse), this protein is Inhibin alpha chain (Inha).